Here is a 347-residue protein sequence, read N- to C-terminus: NADH-ubiquinone oxidoreductase chain 2 (347 aa).

The next 11 helical transmembrane spans lie at 3 to 23, 25 to 45, 59 to 79, 96 to 116, 127 to 147, 148 to 168, 178 to 198, 201 to 221, 247 to 267, 276 to 296, and 325 to 345; these read PLIM…VMTG, HWLM…PMLM, YFFT…INLM, IIMT…FWVP, GLIL…MISP, GINL…GGWG, IMAY…IYNP, TLLN…LFMI, TLLS…WMII, IVLP…YMRL, and LLTP…MMMI.

The protein belongs to the complex I subunit 2 family. Core subunit of respiratory chain NADH dehydrogenase (Complex I) which is composed of 45 different subunits. Interacts with TMEM242.

It is found in the mitochondrion inner membrane. It carries out the reaction a ubiquinone + NADH + 5 H(+)(in) = a ubiquinol + NAD(+) + 4 H(+)(out). Functionally, core subunit of the mitochondrial membrane respiratory chain NADH dehydrogenase (Complex I) which catalyzes electron transfer from NADH through the respiratory chain, using ubiquinone as an electron acceptor. Essential for the catalytic activity and assembly of complex I. This Ozimops beccarii (Beccari's free-tailed bat) protein is NADH-ubiquinone oxidoreductase chain 2.